We begin with the raw amino-acid sequence, 168 residues long: Ribosome maturation factor RimM (168 aa).

In terms of domain architecture, PRC barrel spans 94 to 167 (DGQYYYHQII…FVTVELMEGL (74 aa)).

It belongs to the RimM family. Binds ribosomal protein uS19.

It localises to the cytoplasm. Functionally, an accessory protein needed during the final step in the assembly of 30S ribosomal subunit, possibly for assembly of the head region. Essential for efficient processing of 16S rRNA. May be needed both before and after RbfA during the maturation of 16S rRNA. It has affinity for free ribosomal 30S subunits but not for 70S ribosomes. The chain is Ribosome maturation factor RimM from Limosilactobacillus reuteri (strain DSM 20016) (Lactobacillus reuteri).